The chain runs to 523 residues: GMP synthase [glutamine-hydrolyzing] (523 aa).

In terms of domain architecture, Glutamine amidotransferase type-1 spans 8 to 205; it reads KILILDFGSQ…VVNICGCETK (198 aa). C85 serves as the catalytic Nucleophile. Residues H179 and E181 contribute to the active site. In terms of domain architecture, GMPS ATP-PPase spans 206-398; it reads WTAENIIEDA…LGLPAEMLNR (193 aa). Residue 233-239 coordinates ATP; it reads SGGVDSS.

In terms of assembly, homodimer.

The enzyme catalyses XMP + L-glutamine + ATP + H2O = GMP + L-glutamate + AMP + diphosphate + 2 H(+). Its pathway is purine metabolism; GMP biosynthesis; GMP from XMP (L-Gln route): step 1/1. Its function is as follows. Catalyzes the synthesis of GMP from XMP. The protein is GMP synthase [glutamine-hydrolyzing] of Glaesserella parasuis serovar 5 (strain SH0165) (Haemophilus parasuis).